A 614-amino-acid chain; its full sequence is Dihydroxy-acid dehydratase (614 aa).

D81 contacts Mg(2+). C122 is a [2Fe-2S] cluster binding site. Mg(2+) is bound by residues D123 and K124. Position 124 is an N6-carboxylysine (K124). C193 contacts [2Fe-2S] cluster. E489 lines the Mg(2+) pocket. Catalysis depends on S515, which acts as the Proton acceptor.

Belongs to the IlvD/Edd family. Homodimer. [2Fe-2S] cluster serves as cofactor. Requires Mg(2+) as cofactor.

The catalysed reaction is (2R)-2,3-dihydroxy-3-methylbutanoate = 3-methyl-2-oxobutanoate + H2O. It catalyses the reaction (2R,3R)-2,3-dihydroxy-3-methylpentanoate = (S)-3-methyl-2-oxopentanoate + H2O. The protein operates within amino-acid biosynthesis; L-isoleucine biosynthesis; L-isoleucine from 2-oxobutanoate: step 3/4. It functions in the pathway amino-acid biosynthesis; L-valine biosynthesis; L-valine from pyruvate: step 3/4. In terms of biological role, functions in the biosynthesis of branched-chain amino acids. Catalyzes the dehydration of (2R,3R)-2,3-dihydroxy-3-methylpentanoate (2,3-dihydroxy-3-methylvalerate) into 2-oxo-3-methylpentanoate (2-oxo-3-methylvalerate) and of (2R)-2,3-dihydroxy-3-methylbutanoate (2,3-dihydroxyisovalerate) into 2-oxo-3-methylbutanoate (2-oxoisovalerate), the penultimate precursor to L-isoleucine and L-valine, respectively. The sequence is that of Dihydroxy-acid dehydratase from Saccharophagus degradans (strain 2-40 / ATCC 43961 / DSM 17024).